The following is a 296-amino-acid chain: Protoheme IX farnesyltransferase (296 aa).

The Cytoplasmic segment spans residues 1-9 (MMFKQYLQV). The helical transmembrane segment at 10 to 28 (TKPGIIFGNLISVIGGFLL) threads the bilayer. Residues 29-37 (ASKGSIDYP) lie on the Periplasmic side of the membrane. Residues 38–56 (LFIYTLVGVSLVVASGCVF) traverse the membrane as a helical segment. Over 57-78 (NNYIDRDIDRKMERTKNRVLVK) the chain is Cytoplasmic. A helical transmembrane segment spans residues 79-97 (GLISPGVSLVYATLLGIAG). Residues 98 to 107 (FMLLWFGANP) are Periplasmic-facing. The chain crosses the membrane as a helical span at residues 108–126 (LACWLGVMGFVVYVGVYSL). Topologically, residues 127–197 (YMKRHSVYGT…YQAANIPVLP (71 aa)) are cytoplasmic. The helical transmembrane segment at 198–216 (VIKGISVAKNHITLYIIAF) threads the bilayer. Topologically, residues 217–228 (AVATLMLTLGGY) are periplasmic. Residues 229-247 (AGYKYLVVAAAVSVWWLGM) form a helical membrane-spanning segment. Residues 248-268 (ALRGYKVEDDKVWARKLFGFS) are Cytoplasmic-facing. The helical transmembrane segment at 269–287 (IIAITALSIMMSVDFMVPN) threads the bilayer. Residues 288-296 (SQNLLTYVW) lie on the Periplasmic side of the membrane.

Belongs to the UbiA prenyltransferase family. Protoheme IX farnesyltransferase subfamily.

It localises to the cell inner membrane. It catalyses the reaction heme b + (2E,6E)-farnesyl diphosphate + H2O = Fe(II)-heme o + diphosphate. The protein operates within porphyrin-containing compound metabolism; heme O biosynthesis; heme O from protoheme: step 1/1. In terms of biological role, converts heme B (protoheme IX) to heme O by substitution of the vinyl group on carbon 2 of heme B porphyrin ring with a hydroxyethyl farnesyl side group. The polypeptide is Protoheme IX farnesyltransferase (Salmonella typhi).